We begin with the raw amino-acid sequence, 253 residues long: Pimeloyl-[acyl-carrier protein] methyl ester esterase (253 aa).

Residues W18, 78 to 79 (SL), and 139 to 143 (FLALD) contribute to the substrate site. S78 acts as the Nucleophile in catalysis. Residues D203 and H231 contribute to the active site. H231 contributes to the substrate binding site.

This sequence belongs to the AB hydrolase superfamily. Carboxylesterase BioH family. As to quaternary structure, monomer.

Its subcellular location is the cytoplasm. The catalysed reaction is 6-carboxyhexanoyl-[ACP] methyl ester + H2O = 6-carboxyhexanoyl-[ACP] + methanol + H(+). Its pathway is cofactor biosynthesis; biotin biosynthesis. Its function is as follows. The physiological role of BioH is to remove the methyl group introduced by BioC when the pimeloyl moiety is complete. It allows to synthesize pimeloyl-ACP via the fatty acid synthetic pathway through the hydrolysis of the ester bonds of pimeloyl-ACP esters. The polypeptide is Pimeloyl-[acyl-carrier protein] methyl ester esterase (Xanthomonas campestris pv. campestris (strain 8004)).